The sequence spans 89 residues: Small ribosomal subunit protein uS15 (89 aa).

Belongs to the universal ribosomal protein uS15 family. Part of the 30S ribosomal subunit. Forms a bridge to the 50S subunit in the 70S ribosome, contacting the 23S rRNA.

In terms of biological role, one of the primary rRNA binding proteins, it binds directly to 16S rRNA where it helps nucleate assembly of the platform of the 30S subunit by binding and bridging several RNA helices of the 16S rRNA. Its function is as follows. Forms an intersubunit bridge (bridge B4) with the 23S rRNA of the 50S subunit in the ribosome. This Chlorobium limicola (strain DSM 245 / NBRC 103803 / 6330) protein is Small ribosomal subunit protein uS15.